The primary structure comprises 839 residues: Periplasmic nitrate reductase (839 aa).

Positions 1-34 form a signal peptide, tat-type signal; it reads MTLTRRDFIKANAAAAAATAAAVNLPLVPSMAQA. The region spanning 46–102 is the 4Fe-4S Mo/W bis-MGD-type domain; the sequence is IKWDKAACRFCGTGCSVLVGTKGGRVVATQGDPDAPVNRGLNCIKGYFLSKIMYGED. Residues C53, C56, C60, and C88 each contribute to the [4Fe-4S] cluster site. Mo-bis(molybdopterin guanine dinucleotide)-binding positions include K90, Q157, N182, C186, 219–226, 250–254, 269–271, M379, Q383, N489, 515–516, K538, D565, and 729–738; these read WGSNMAEM, STYEH, QTD, SD, and TGRVLEHWHT. F805 is a binding site for substrate. Residues N813 and K830 each contribute to the Mo-bis(molybdopterin guanine dinucleotide) site.

The protein belongs to the prokaryotic molybdopterin-containing oxidoreductase family. NasA/NapA/NarB subfamily. Component of the periplasmic nitrate reductase NapAB complex composed of NapA and NapB. [4Fe-4S] cluster is required as a cofactor. Requires Mo-bis(molybdopterin guanine dinucleotide) as cofactor. In terms of processing, predicted to be exported by the Tat system. The position of the signal peptide cleavage has not been experimentally proven.

It localises to the periplasm. It carries out the reaction 2 Fe(II)-[cytochrome] + nitrate + 2 H(+) = 2 Fe(III)-[cytochrome] + nitrite + H2O. Catalytic subunit of the periplasmic nitrate reductase complex NapAB. Receives electrons from NapB and catalyzes the reduction of nitrate to nitrite. This chain is Periplasmic nitrate reductase, found in Laribacter hongkongensis (strain HLHK9).